The following is a 204-amino-acid chain: Pyridoxal 5'-phosphate synthase subunit PdxT (204 aa).

L-glutamine is bound at residue 52-54 (GES). Catalysis depends on Cys84, which acts as the Nucleophile. L-glutamine is bound by residues Arg116 and 143–144 (IR). Residues His184 and Glu186 each act as charge relay system in the active site.

Belongs to the glutaminase PdxT/SNO family. In the presence of PdxS, forms a dodecamer of heterodimers. Only shows activity in the heterodimer.

The catalysed reaction is aldehydo-D-ribose 5-phosphate + D-glyceraldehyde 3-phosphate + L-glutamine = pyridoxal 5'-phosphate + L-glutamate + phosphate + 3 H2O + H(+). The enzyme catalyses L-glutamine + H2O = L-glutamate + NH4(+). The protein operates within cofactor biosynthesis; pyridoxal 5'-phosphate biosynthesis. In terms of biological role, catalyzes the hydrolysis of glutamine to glutamate and ammonia as part of the biosynthesis of pyridoxal 5'-phosphate. The resulting ammonia molecule is channeled to the active site of PdxS. The chain is Pyridoxal 5'-phosphate synthase subunit PdxT from Pyrobaculum arsenaticum (strain DSM 13514 / JCM 11321 / PZ6).